Reading from the N-terminus, the 338-residue chain is RNA 3'-terminal phosphate cyclase (338 aa).

ATP-binding positions include glutamine 103 and 283–287; that span reads YLADQ. The Tele-AMP-histidine intermediate role is filled by histidine 308.

This sequence belongs to the RNA 3'-terminal cyclase family. Type 1 subfamily.

The protein localises to the cytoplasm. The catalysed reaction is a 3'-end 3'-phospho-ribonucleotide-RNA + ATP = a 3'-end 2',3'-cyclophospho-ribonucleotide-RNA + AMP + diphosphate. In terms of biological role, catalyzes the conversion of 3'-phosphate to a 2',3'-cyclic phosphodiester at the end of RNA. The mechanism of action of the enzyme occurs in 3 steps: (A) adenylation of the enzyme by ATP; (B) transfer of adenylate to an RNA-N3'P to produce RNA-N3'PP5'A; (C) and attack of the adjacent 2'-hydroxyl on the 3'-phosphorus in the diester linkage to produce the cyclic end product. The biological role of this enzyme is unknown but it is likely to function in some aspects of cellular RNA processing. The polypeptide is RNA 3'-terminal phosphate cyclase (Escherichia coli O9:H4 (strain HS)).